We begin with the raw amino-acid sequence, 476 residues long: Protein transport protein Sec61 subunit alpha isoform B (476 aa).

The Cytoplasmic segment spans residues 2–33 (GIKFLEVIKPFCAVLPEIQKPERKIQFREKVL). The chain crosses the membrane as a helical span at residues 34-53 (WTAITLFIFLVCCQIPLFGI). Topologically, residues 54-76 (MSSDSADPFYWMRVILASNRGTL) are lumenal. Residues 77–96 (MELGISPIVTSGLIMQLLAG) traverse the membrane as a helical segment. The Cytoplasmic segment spans residues 97–117 (AKIIEVGDTPKDRALFNGAQK). A helical membrane pass occupies residues 118–138 (LFGMIITIGQAIVYVMTGMYG). At 139 to 144 (DPSDMG) the chain is on the lumenal side. A helical membrane pass occupies residues 145 to 165 (AGICLLIIIQLFVAGLIVLLL). Topologically, residues 166 to 172 (DELLQKG) are cytoplasmic. Residues 173–193 (YGLGSGISLFIATNICETIVW) form a helical membrane-spanning segment. Residues 194–240 (KAFSPTTVNTGRGTEFEGAIIALFHLLATRTDKVRALREAFYRQNLP) are Lumenal-facing. The chain crosses the membrane as a helical span at residues 241–261 (NLMNLLATVFVFGVVIYFQGF). Residues 262–288 (RVDLPIKSARYRGQYNTYPIKLFYTSN) lie on the Cytoplasmic side of the membrane. Residues 289 to 309 (IPIILQSALVSNLYVISQMLS) traverse the membrane as a helical segment. Over 310 to 354 (TRFSGNFLVNLLGTWSDTSSGGPARAYPVGGLCYYFSPPESFGSV) the chain is Lumenal. Residues 355-375 (LDDPIHAAIYICFMLGSCAFF) traverse the membrane as a helical segment. Residues 376–420 (SKTWIEVSGSSAKDVAKQLKEQQMVMRGHRETSMVHELNRYIPTA) lie on the Cytoplasmic side of the membrane. A helical membrane pass occupies residues 421 to 441 (AAFGGLCIGGLSVMADFLGAI). Over 442 to 445 (GSGT) the chain is Lumenal. The chain crosses the membrane as a helical span at residues 446 to 462 (GILLAVTIIYQYFEIFV). The Cytoplasmic segment spans residues 463–476 (KEQSEMGSMGALLF).

Belongs to the SecY/SEC61-alpha family. In terms of assembly, the SEC61 channel-forming translocon complex consists of channel-forming core components SEC61A1, SEC61B and SEC61G and different auxiliary components such as SEC62 and SEC63.

The protein resides in the endoplasmic reticulum membrane. Functionally, component of SEC61 channel-forming translocon complex that mediates transport of signal peptide-containing precursor polypeptides across the endoplasmic reticulum (ER). Forms a ribosome receptor and a gated pore in the ER membrane, both functions required for cotranslational translocation of nascent polypeptides. The chain is Protein transport protein Sec61 subunit alpha isoform B (sec61ab) from Oncorhynchus mykiss (Rainbow trout).